The sequence spans 284 residues: MGLSRYLLGLLLGVLCTPAPAEVLFRCPPCSPERLATCPGSAPRPPCAELVRAPGCGCCPVCARLEGESCGVYTARCAGGLRCYPHPGSELPLQALVLGLGTCGKRRDTEYGSSQERGTELPEERSDNMLVDNKLEAGPAVAGEAAPRKPSKKEMKEIAVTRERANEQQRSKSNKSEDKKRPARSLCQLQLDQVLERISGMHLPDDRGPLEHLYALHIPNCDKNGFFNLKQCKMSVNGQRGECWCVNPITGKALPGSPTIRGDPECHLYYTSPEEGRAHTQRAP.

The N-terminal stretch at 1 to 21 (MGLSRYLLGLLLGVLCTPAPA) is a signal peptide. Residues 23 to 106 (VLFRCPPCSP…VLGLGTCGKR (84 aa)) form the IGFBP N-terminal domain. Cystine bridges form between C27/C56, C30/C58, C38/C59, C47/C62, C70/C83, and C77/C103. Residues 108-184 (DTEYGSSQER…KSEDKKRPAR (77 aa)) are disordered. Over residues 117–127 (RGTELPEERSD) the composition is skewed to basic and acidic residues. Residues 136–145 (EAGPAVAGEA) show a composition bias toward low complexity. A compositionally biased stretch (basic and acidic residues) spans 152 to 180 (KKEMKEIAVTRERANEQQRSKSNKSEDKK). The Thyroglobulin type-1 domain occupies 184-266 (RSLCQLQLDQ…SPTIRGDPEC (83 aa)). Cystine bridges form between C187–C221, C232–C243, and C245–C266. Residues 261 to 263 (RGD) carry the Cell attachment site motif.

Interacts with igf1 and igf2.

It is found in the secreted. Functionally, IGF-binding proteins prolong the half-life of the IGFs and have been shown to either inhibit or stimulate the growth promoting effects of the IGFs on cell culture. They alter the interaction of IGFs with their cell surface receptors. The protein is Insulin-like growth factor-binding protein 2 of Xenopus tropicalis (Western clawed frog).